Here is a 496-residue protein sequence, read N- to C-terminus: Cytochrome P450 monooxygenase claT (496 aa).

A helical transmembrane segment spans residues 2-22 (LSLIVEATLLLVVLVLSAHYV). Cysteine 423 is a heme binding site.

The protein belongs to the cytochrome P450 family. Heme serves as cofactor.

Its subcellular location is the membrane. It carries out the reaction wigandol + 4 reduced [NADPH--hemoprotein reductase] + 4 O2 = arnebinol A + 4 oxidized [NADPH--hemoprotein reductase] + 6 H2O + 4 H(+). The catalysed reaction is arnebinol A + reduced [NADPH--hemoprotein reductase] + O2 = clavilactone A + oxidized [NADPH--hemoprotein reductase] + H2O + H(+). It catalyses the reaction (2E)-geranylhydroquinone + reduced [NADPH--hemoprotein reductase] + O2 = isoalliodorol + oxidized [NADPH--hemoprotein reductase] + H2O + H(+). It participates in secondary metabolite biosynthesis; terpenoid biosynthesis. Functionally, cytochrome P450 monooxygenase; part of the gene cluster that mediates the biosynthesis of clavilactone A, a meroterpenoid that features a unique benzo-fused ten-membered carbocyclic ring unit with an alpha,beta-epoxy-gamma-lactone moiety, forming an intriguing 10/5/3 tricyclic nested skeleton. ClaR, ClaS and ClaT are sufficient to produce clavilactone A. Within the pathway, claT acts as a multifunctional cytochrome P450 monooxygenase that catalyzes a ten-electron oxidation to accomplish the biosynthesis of the 10/5/3 tricyclic nested skeleton in clavilactones. The biosynthesis begins with the prenyltransferase claS that transfers geranyl pyrophosphate (GPP) to hydroquinone to produces geranylhydroquinone. The cytochrome P450 monooxygenase claR then catalyzes the diradical coupling reaction between the intramolecular hydroquinone and allyl moieties to form the benzo-fused ten-membered carbocyclic ring unit of wigantol. Finally the cytochrome P450 monooxygenase claT exquisitely and stereoselectively assembles the alpha,beta-epoxy-gamma-lactone moiety, producing clavilactone A via arnebinol A. The chain is Cytochrome P450 monooxygenase claT from Ampulloclitocybe clavipes (Club foot).